Here is a 295-residue protein sequence, read N- to C-terminus: Ribosomal protein L11 methyltransferase (295 aa).

The S-adenosyl-L-methionine site is built by Thr139, Gly166, Asp188, and Asn231.

The protein belongs to the methyltransferase superfamily. PrmA family.

It localises to the cytoplasm. The catalysed reaction is L-lysyl-[protein] + 3 S-adenosyl-L-methionine = N(6),N(6),N(6)-trimethyl-L-lysyl-[protein] + 3 S-adenosyl-L-homocysteine + 3 H(+). Functionally, methylates ribosomal protein L11. This is Ribosomal protein L11 methyltransferase from Cyanothece sp. (strain PCC 7425 / ATCC 29141).